The sequence spans 273 residues: Cell division protein ZipA (273 aa).

A topological domain (periplasmic) is located at residue M1. A helical transmembrane segment spans residues 2–22; it reads DIGLREWLIVIGIIVIAGILF. The Cytoplasmic segment spans residues 23 to 273; the sequence is DGWRRMRGGK…ERRQMTIKQR (251 aa). The disordered stretch occupies residues 61–127; sequence VVNREHEPSL…DLQERPQKEQ (67 aa).

Belongs to the ZipA family. Interacts with FtsZ via their C-terminal domains.

The protein resides in the cell inner membrane. In terms of biological role, essential cell division protein that stabilizes the FtsZ protofilaments by cross-linking them and that serves as a cytoplasmic membrane anchor for the Z ring. Also required for the recruitment to the septal ring of downstream cell division proteins. This is Cell division protein ZipA from Stutzerimonas stutzeri (strain A1501) (Pseudomonas stutzeri).